We begin with the raw amino-acid sequence, 329 residues long: Mo25-like protein (329 aa).

Belongs to the Mo25 family.

This is Mo25-like protein (pmo25) from Schizosaccharomyces pombe (strain 972 / ATCC 24843) (Fission yeast).